Reading from the N-terminus, the 564-residue chain is Esterase FE4 (564 aa).

An N-terminal signal peptide occupies residues 1-23 (MKNTCGILLNLFLFIGCFLTCSA). N-linked (GlcNAc...) asparagine glycosylation occurs at Asn-81. Cys-89 and Cys-106 are joined by a disulfide. The active-site Acyl-ester intermediate is the Ser-214. Cys-266 and Cys-277 are joined by a disulfide. Asn-269 is a glycosylation site (N-linked (GlcNAc...) asparagine). Glu-339 (charge relay system) is an active-site residue. N-linked (GlcNAc...) asparagine glycosylation is found at Asn-371, Asn-404, and Asn-443. The active-site Charge relay system is the His-463.

The protein belongs to the type-B carboxylesterase/lipase family.

The enzyme catalyses a carboxylic ester + H2O = an alcohol + a carboxylate + H(+). Its function is as follows. Overproduction of nonspecific esterases is a common mechanism of resistance to organophosphate insecticides. In Myzus persicae (Green peach aphid), this protein is Esterase FE4.